Consider the following 432-residue polypeptide: 3-oxo-tetronate kinase (432 aa).

ATP-binding positions include histidine 155, serine 272, alanine 324, glycine 344, glutamate 348, 370–373 (GGET), and glycine 414.

It belongs to the four-carbon acid sugar kinase family.

It catalyses the reaction 3-dehydro-L-erythronate + ATP = 3-dehydro-4-O-phospho-L-erythronate + ADP + H(+). The enzyme catalyses 3-dehydro-D-erythronate + ATP = 3-dehydro-4-O-phospho-D-erythronate + ADP + H(+). In terms of biological role, catalyzes the ATP-dependent phosphorylation of 3-oxo-tetronate to 3-oxo-tetronate 4-phosphate. This chain is 3-oxo-tetronate kinase, found in Cupriavidus necator (strain ATCC 17699 / DSM 428 / KCTC 22496 / NCIMB 10442 / H16 / Stanier 337) (Ralstonia eutropha).